We begin with the raw amino-acid sequence, 820 residues long: Trimethylamine-N-oxide reductase (820 aa).

A signal peptide (tat-type signal) is located at residues 1–33 (MAITRRSFLKGVATTSAASVIGPSLLASASANA). Ser179 serves as a coordination point for Mo-bis(molybdopterin guanine dinucleotide).

The protein belongs to the prokaryotic molybdopterin-containing oxidoreductase family. Requires Mo-bis(molybdopterin guanine dinucleotide) as cofactor. In terms of processing, predicted to be exported by the Tat system. The position of the signal peptide cleavage has not been experimentally proven.

Its subcellular location is the periplasm. It catalyses the reaction trimethylamine + 2 Fe(III)-[cytochrome c] + H2O = trimethylamine N-oxide + 2 Fe(II)-[cytochrome c] + 3 H(+). In terms of biological role, reduces trimethylamine-N-oxide (TMAO) into trimethylamine; an anaerobic reaction coupled to energy-yielding reactions. The sequence is that of Trimethylamine-N-oxide reductase (torA) from Vibrio vulnificus (strain YJ016).